Consider the following 966-residue polypeptide: Muscular LMNA-interacting protein (966 aa).

Position 129 is a phosphoserine (S129). Disordered stretches follow at residues 132–154 (EDEATCRQGEQGPPGATGNIATR), 182–207 (SHPEIPHGIAPQQKHGQLTSPTTSEQ), 303–337 (LAPEAQKKVSTSSALNPREDVRTSPSPASGASLRS), 354–388 (PSPKPLTSSSHGSLSTVCSQTSSSGNLSKSGLKSP), 434–562 (IKQT…TRPS), 597–684 (KRTC…TPSL), 785–837 (SMHS…SQLT), and 929–966 (SLRDEQEKSPTLLSQDTYNKPGHPMVTIPEHDTLDSKE). The segment at 144–810 (PPGATGNIAT…GSETIKTPTT (667 aa)) is required for interaction with ISL1. Composition is skewed to polar residues over residues 195 to 207 (KHGQLTSPTTSEQ) and 325 to 337 (TSPSPASGASLRS). Composition is skewed to low complexity over residues 354 to 387 (PSPKPLTSSSHGSLSTVCSQTSSSGNLSKSGLKS), 437 to 455 (TPSTPKKSLSSCSLTTGST), and 478 to 497 (PLSQAQPPSPPALASSSYAA). Position 486 is a phosphoserine (S486). The segment covering 507–521 (TLRSSTTPPQSQTDL) has biased composition (polar residues). Composition is skewed to basic and acidic residues over residues 542-555 (GRKDGDLRAPEKNR) and 597-607 (KRTCSQRHSDQ). 2 stretches are compositionally biased toward polar residues: residues 639–649 (SSLTQALQRSP) and 657–684 (GSATCPSRTGMPDSTASNRSSRVSTPSL). Residues 785 to 797 (SMHSSDSPSRPSQ) show a composition bias toward low complexity. S791 bears the Phosphoserine mark. Over residues 798 to 810 (TMLGSETIKTPTT) the composition is skewed to polar residues. The segment covering 825–834 (SSSSSTTSES) has biased composition (low complexity). Residues 937 to 946 (SPTLLSQDTY) show a composition bias toward polar residues. A compositionally biased stretch (basic and acidic residues) spans 957–966 (PEHDTLDSKE).

In terms of assembly, directly interacts with LMNA. Interacts with ISL1 (via N-terminal domain); the interaction represses ISL1 transactivator activity. Interactions of ISL1 with MLIP1 and GCN5/KAT2A may be mutually exclusive. As to expression, expressed in cardiomyoctes. Expression is highly reduced in hypertrophic cardiomyocytes.

It is found in the nucleus. It localises to the nucleus envelope. Its subcellular location is the PML body. The protein resides in the cytoplasm. The protein localises to the cytosol. It is found in the cell membrane. It localises to the sarcolemma. Required for myoblast differentiation into myotubes, possibly acting as a transcriptional regulator of the myogenic program. Required for cardiac adaptation to stress through integrated regulation of the AKT/mTOR pathways and FOXO1. Regulates cardiac homeostasis and plays a role in the protection against cardiac hypertrophy. Binds chromatin. May act as a transcriptional cofactor for ISL1, repressing its transcriptional activity. May also repress MYOCD transcriptional activity. This Rattus norvegicus (Rat) protein is Muscular LMNA-interacting protein.